A 314-amino-acid polypeptide reads, in one-letter code: Olfactory receptor 1Q1 (314 aa).

Over 1-25 (MDNSNWTSVSHFVLLGISTHPEEQI) the chain is Extracellular. Asn5 carries an N-linked (GlcNAc...) asparagine glycan. Residues 26–49 (PLFLVFSLMYAINISGNLAIITLI) traverse the membrane as a helical segment. Residues 50–57 (LSAPRLHI) are Cytoplasmic-facing. Residues 58–79 (PMYIFLSNLALTDICFTSTTVP) traverse the membrane as a helical segment. Residues 80–100 (KMLQIIFSPTKVISYTGCLAQ) lie on the Extracellular side of the membrane. Cys97 and Cys189 form a disulfide bridge. The chain crosses the membrane as a helical span at residues 101-120 (TYFFICFAVMENFILAVMAY). Residues 121-139 (DRYIAICHPFHYTMILTRM) are Cytoplasmic-facing. The chain crosses the membrane as a helical span at residues 140 to 158 (LCVKMVVMCHALSHLHAML). Over 159–195 (HTFLIGQLIFCADNRIPHFFCDLYALMKISCTSTYLN) the chain is Extracellular. Residues 196–219 (TLMIHTEGAVVISGALAFITASYA) traverse the membrane as a helical segment. The Cytoplasmic portion of the chain corresponds to 220-236 (CIILVVLRIPSAKGRWK). The chain crosses the membrane as a helical span at residues 237–259 (TFSTCGSHLTVVAIFYGTLSWVY). The Extracellular portion of the chain corresponds to 260–272 (FRPLSSYSVTKGR). The helical transmembrane segment at 273–292 (IITVVYTVVTPMLNPFIYSL) threads the bilayer. Residues 293–314 (RNGDVKGGFMKWMSRMQTFFFR) lie on the Cytoplasmic side of the membrane.

Belongs to the G-protein coupled receptor 1 family.

The protein resides in the cell membrane. Its function is as follows. Odorant receptor. The sequence is that of Olfactory receptor 1Q1 (OR1Q1) from Homo sapiens (Human).